Consider the following 300-residue polypeptide: Acetaldehyde dehydrogenase (300 aa).

An NAD(+)-binding site is contributed by 10 to 13 (SGNI). Cysteine 129 (acyl-thioester intermediate) is an active-site residue. NAD(+)-binding positions include 160–168 (SAGPGTRKN) and asparagine 271.

Belongs to the acetaldehyde dehydrogenase family.

The enzyme catalyses acetaldehyde + NAD(+) + CoA = acetyl-CoA + NADH + H(+). This Alkalilimnicola ehrlichii (strain ATCC BAA-1101 / DSM 17681 / MLHE-1) protein is Acetaldehyde dehydrogenase.